Here is a 179-residue protein sequence, read N- to C-terminus: Segregation and condensation protein B (179 aa).

It belongs to the ScpB family. As to quaternary structure, homodimer. Homodimerization may be required to stabilize the binding of ScpA to the Smc head domains. Component of a cohesin-like complex composed of ScpA, ScpB and the Smc homodimer, in which ScpA and ScpB bind to the head domain of Smc. The presence of the three proteins is required for the association of the complex with DNA.

It localises to the cytoplasm. Functionally, participates in chromosomal partition during cell division. May act via the formation of a condensin-like complex containing Smc and ScpA that pull DNA away from mid-cell into both cell halves. This is Segregation and condensation protein B from Clostridioides difficile (strain 630) (Peptoclostridium difficile).